We begin with the raw amino-acid sequence, 590 residues long: Arginine--tRNA ligase (590 aa).

Positions 130–140 (PNIAKEMHVGH) match the 'HIGH' region motif.

The protein belongs to the class-I aminoacyl-tRNA synthetase family. Monomer.

It localises to the cytoplasm. The enzyme catalyses tRNA(Arg) + L-arginine + ATP = L-arginyl-tRNA(Arg) + AMP + diphosphate. The protein is Arginine--tRNA ligase of Synechococcus sp. (strain CC9311).